A 101-amino-acid polypeptide reads, in one-letter code: Small ribosomal subunit protein bS18c (101 aa).

Over residues 1–19 (MDKSKRPFRKSKRSFRRRL) the composition is skewed to basic residues. Disordered stretches follow at residues 1-23 (MDKS…PPIG) and 82-101 (KQFE…TRNK).

This sequence belongs to the bacterial ribosomal protein bS18 family. Part of the 30S ribosomal subunit.

The protein localises to the plastid. The protein resides in the chloroplast. In Drimys granadensis, this protein is Small ribosomal subunit protein bS18c.